A 198-amino-acid chain; its full sequence is Na(+)-translocating NADH-quinone reductase subunit E (198 aa).

6 helical membrane-spanning segments follow: residues 11-31, 35-55, 77-97, 110-130, 140-160, and 176-196; these read SVFI…FLAV, VSTA…SVPV, FLNF…LEMI, GIFL…SFMV, IVYG…LAGI, and LGIT…FSGV.

The protein belongs to the NqrDE/RnfAE family. In terms of assembly, composed of six subunits; NqrA, NqrB, NqrC, NqrD, NqrE and NqrF.

It is found in the cell inner membrane. The enzyme catalyses a ubiquinone + n Na(+)(in) + NADH + H(+) = a ubiquinol + n Na(+)(out) + NAD(+). In terms of biological role, NQR complex catalyzes the reduction of ubiquinone-1 to ubiquinol by two successive reactions, coupled with the transport of Na(+) ions from the cytoplasm to the periplasm. NqrA to NqrE are probably involved in the second step, the conversion of ubisemiquinone to ubiquinol. In Histophilus somni (strain 2336) (Haemophilus somnus), this protein is Na(+)-translocating NADH-quinone reductase subunit E.